Consider the following 209-residue polypeptide: Guanylate kinase (209 aa).

The Guanylate kinase-like domain maps to 7–185 (GNLYIVAAPS…AAMELQSIVI (179 aa)). 14 to 21 (APSGGGKT) is a binding site for ATP.

The protein belongs to the guanylate kinase family.

The protein localises to the cytoplasm. It catalyses the reaction GMP + ATP = GDP + ADP. Functionally, essential for recycling GMP and indirectly, cGMP. In Legionella pneumophila (strain Lens), this protein is Guanylate kinase.